Consider the following 300-residue polypeptide: Inosose dehydratase (300 aa).

It belongs to the IolE/MocC family. It depends on glutathione as a cofactor. Co(2+) is required as a cofactor. The cofactor is Mn(2+).

It catalyses the reaction scyllo-inosose = 3D-3,5/4-trihydroxycyclohexane-1,2-dione + H2O. In terms of biological role, catalyzes the dehydration of inosose (2-keto-myo-inositol, 2KMI or 2,4,6/3,5-pentahydroxycyclohexanone) to 3D-(3,5/4)-trihydroxycyclohexane-1,2-dione (D-2,3-diketo-4-deoxy-epi-inositol). This is Inosose dehydratase from Mesomycoplasma hyopneumoniae (strain 232) (Mycoplasma hyopneumoniae).